Consider the following 551-residue polypeptide: Scaffold protein OPG125 (551 aa).

The protein belongs to the orthopoxvirus protein OPG125 family. Interacts with the late transcription elongation factor VLTF-4/OPG110. Interacts with the late transcription factors VLTF-1.

It localises to the membrane. Functionally, acts with RNA polymerase to initiate transcription from late gene promoters. This Monkeypox virus protein is Scaffold protein OPG125 (OPG125).